The chain runs to 210 residues: Ribonuclease HII (210 aa).

Positions 18–208 (YPVAGIDEAG…VNDIISQTKL (191 aa)) constitute an RNase H type-2 domain. Residues aspartate 24, glutamate 25, and aspartate 116 each coordinate a divalent metal cation.

It belongs to the RNase HII family. Mn(2+) is required as a cofactor. The cofactor is Mg(2+).

It localises to the cytoplasm. It carries out the reaction Endonucleolytic cleavage to 5'-phosphomonoester.. Its function is as follows. Endonuclease that specifically degrades the RNA of RNA-DNA hybrids. This chain is Ribonuclease HII, found in Endomicrobium trichonymphae.